A 650-amino-acid polypeptide reads, in one-letter code: Acetyl-coenzyme A synthetase (650 aa).

CoA contacts are provided by residues 191 to 194 (RGGR), Thr311, and Asn335. Residues 387–389 (GEP), 411–416 (DTWWQT), Asp501, and Arg516 contribute to the ATP site. Ser524 is a CoA binding site. Arg527 lines the ATP pocket. The Mg(2+) site is built by Val538, His540, and Ile543. Arg585 is a binding site for CoA. Lys610 bears the N6-acetyllysine mark.

It belongs to the ATP-dependent AMP-binding enzyme family. The cofactor is Mg(2+). In terms of processing, acetylated. Deacetylation by the SIR2-homolog deacetylase activates the enzyme.

The catalysed reaction is acetate + ATP + CoA = acetyl-CoA + AMP + diphosphate. Functionally, catalyzes the conversion of acetate into acetyl-CoA (AcCoA), an essential intermediate at the junction of anabolic and catabolic pathways. AcsA undergoes a two-step reaction. In the first half reaction, AcsA combines acetate with ATP to form acetyl-adenylate (AcAMP) intermediate. In the second half reaction, it can then transfer the acetyl group from AcAMP to the sulfhydryl group of CoA, forming the product AcCoA. The chain is Acetyl-coenzyme A synthetase from Vibrio vulnificus (strain CMCP6).